A 442-amino-acid polypeptide reads, in one-letter code: Exodeoxyribonuclease 7 large subunit (442 aa).

The protein belongs to the XseA family. As to quaternary structure, heterooligomer composed of large and small subunits.

It localises to the cytoplasm. The enzyme catalyses Exonucleolytic cleavage in either 5'- to 3'- or 3'- to 5'-direction to yield nucleoside 5'-phosphates.. Its function is as follows. Bidirectionally degrades single-stranded DNA into large acid-insoluble oligonucleotides, which are then degraded further into small acid-soluble oligonucleotides. This chain is Exodeoxyribonuclease 7 large subunit, found in Shewanella loihica (strain ATCC BAA-1088 / PV-4).